The following is a 401-amino-acid chain: Tyrosine--tRNA ligase (401 aa).

The 'HIGH' region motif lies at proline 42–histidine 51. The short motif at lysine 226–serine 230 is the 'KMSKS' region element. Lysine 229 provides a ligand contact to ATP. The region spanning methionine 334–leucine 394 is the S4 RNA-binding domain.

This sequence belongs to the class-I aminoacyl-tRNA synthetase family. TyrS type 2 subfamily. In terms of assembly, homodimer.

The protein localises to the cytoplasm. It catalyses the reaction tRNA(Tyr) + L-tyrosine + ATP = L-tyrosyl-tRNA(Tyr) + AMP + diphosphate + H(+). In terms of biological role, catalyzes the attachment of tyrosine to tRNA(Tyr) in a two-step reaction: tyrosine is first activated by ATP to form Tyr-AMP and then transferred to the acceptor end of tRNA(Tyr). This chain is Tyrosine--tRNA ligase, found in Haemophilus influenzae (strain ATCC 51907 / DSM 11121 / KW20 / Rd).